We begin with the raw amino-acid sequence, 158 residues long: MGRFIFVSFGLLVVFLSLSGTGADFNCPPGWSAYDQYCYQVIKEPKNWDDAERFCTEQADGGHLVSIESKGERDFVAQLVSQNIESVEDHVWTGLRVQNKEKQCSTEWSDGSSVSYENLLELYMRKCGALERETGFHKWINLGCIQLNPFVCKFPPQC.

The first 23 residues, 1 to 23, serve as a signal peptide directing secretion; the sequence is MGRFIFVSFGLLVVFLSLSGTGA. 3 disulfide bridges follow: Cys-27-Cys-38, Cys-55-Cys-152, and Cys-127-Cys-144. A C-type lectin domain is found at 34–153; that stretch reads YDQYCYQVIK…CIQLNPFVCK (120 aa).

It belongs to the snaclec family. Heterotetramer of the subunits alpha-1, alpha-2, beta-1 and beta-2; disulfide-linked. As to expression, expressed by the venom gland.

The protein resides in the secreted. Agglucetin specifically causes platelet aggregation and surface exposure of integrin alpha-IIb/beta-3 with a GPIb-(GP1BA-) dependent manner in washed platelets. It binds to human platelets in a saturable manner, and its binding is specifically blocked by anti-GP Ib mAb. It regulates endothelial cell survival and promotes angiogenesis by activating integrin alpha-v/beta-3 signaling through FAK/phosphatidylinositol 3-kinase (PI3K)/Akt pathway. This Deinagkistrodon acutus (Hundred-pace snake) protein is Snaclec agglucetin subunit alpha-2.